We begin with the raw amino-acid sequence, 209 residues long: Uracil phosphoribosyltransferase (209 aa).

Residues Arg79, Arg104, and 131 to 139 each bind 5-phospho-alpha-D-ribose 1-diphosphate; that span reads DPMLATGGS. Uracil contacts are provided by residues Ile194 and 199 to 201; that span reads GDA. Asp200 contacts 5-phospho-alpha-D-ribose 1-diphosphate.

The protein belongs to the UPRTase family. It depends on Mg(2+) as a cofactor.

It catalyses the reaction UMP + diphosphate = 5-phospho-alpha-D-ribose 1-diphosphate + uracil. The protein operates within pyrimidine metabolism; UMP biosynthesis via salvage pathway; UMP from uracil: step 1/1. Allosterically activated by GTP. Functionally, catalyzes the conversion of uracil and 5-phospho-alpha-D-ribose 1-diphosphate (PRPP) to UMP and diphosphate. In Chromohalobacter salexigens (strain ATCC BAA-138 / DSM 3043 / CIP 106854 / NCIMB 13768 / 1H11), this protein is Uracil phosphoribosyltransferase.